The sequence spans 251 residues: GTP cyclohydrolase 1 type 2 homolog (251 aa).

Histidine 62, histidine 63, aspartate 103, histidine 215, and glutamate 219 together coordinate a divalent metal cation.

Belongs to the GTP cyclohydrolase I type 2/NIF3 family. Homohexamer.

This is GTP cyclohydrolase 1 type 2 homolog from Mycoplasmopsis pulmonis (strain UAB CTIP) (Mycoplasma pulmonis).